Consider the following 274-residue polypeptide: Regulator of G-protein signaling rgs-11 (274 aa).

One can recognise an RGS domain in the interval 137 to 256 (SPGLLAASKY…LEDPLYLDLL (120 aa)).

The chain is Regulator of G-protein signaling rgs-11 (rgs-11) from Caenorhabditis elegans.